A 310-amino-acid chain; its full sequence is Ribonuclease Z (310 aa).

Positions 61, 63, 65, 66, and 139 each coordinate Zn(2+). Asp65 acts as the Proton acceptor in catalysis. The segment at Glu150–Arg175 is disordered. Residues Arg153–Glu164 are compositionally biased toward basic and acidic residues. Residues Asp210 and His268 each coordinate Zn(2+).

This sequence belongs to the RNase Z family. As to quaternary structure, homodimer. Zn(2+) serves as cofactor.

It catalyses the reaction Endonucleolytic cleavage of RNA, removing extra 3' nucleotides from tRNA precursor, generating 3' termini of tRNAs. A 3'-hydroxy group is left at the tRNA terminus and a 5'-phosphoryl group is left at the trailer molecule.. Its function is as follows. Zinc phosphodiesterase, which displays some tRNA 3'-processing endonuclease activity. Probably involved in tRNA maturation, by removing a 3'-trailer from precursor tRNA. This is Ribonuclease Z from Halorubrum lacusprofundi (strain ATCC 49239 / DSM 5036 / JCM 8891 / ACAM 34).